Here is a 363-residue protein sequence, read N- to C-terminus: Large ribosomal subunit protein uL4 (363 aa).

Belongs to the universal ribosomal protein uL4 family. In terms of assembly, component of the large ribosomal subunit. Mature ribosomes consist of a small (40S) and a large (60S) subunit. The 40S subunit contains about 32 different proteins and 1 molecule of RNA (18S). The 60S subunit contains 45 different proteins and 3 molecules of RNA (25S, 5.8S and 5S).

The protein resides in the cytoplasm. Its function is as follows. Component of the ribosome, a large ribonucleoprotein complex responsible for the synthesis of proteins in the cell. The small ribosomal subunit (SSU) binds messenger RNAs (mRNAs) and translates the encoded message by selecting cognate aminoacyl-transfer RNA (tRNA) molecules. The large subunit (LSU) contains the ribosomal catalytic site termed the peptidyl transferase center (PTC), which catalyzes the formation of peptide bonds, thereby polymerizing the amino acids delivered by tRNAs into a polypeptide chain. The nascent polypeptides leave the ribosome through a tunnel in the LSU and interact with protein factors that function in enzymatic processing, targeting, and the membrane insertion of nascent chains at the exit of the ribosomal tunnel. The protein is Large ribosomal subunit protein uL4 of Candida albicans (strain SC5314 / ATCC MYA-2876) (Yeast).